The following is a 155-amino-acid chain: Ribonuclease H (155 aa).

One can recognise an RNase H type-1 domain in the interval 9 to 150; it reads DGQQVEMWTD…ADALANQGVE (142 aa). The Mg(2+) site is built by aspartate 18, glutamate 56, aspartate 78, and aspartate 142.

The protein belongs to the RNase H family. In terms of assembly, monomer. Mg(2+) is required as a cofactor.

The protein resides in the cytoplasm. It catalyses the reaction Endonucleolytic cleavage to 5'-phosphomonoester.. Its function is as follows. Endonuclease that specifically degrades the RNA of RNA-DNA hybrids. The chain is Ribonuclease H from Bordetella bronchiseptica (strain ATCC BAA-588 / NCTC 13252 / RB50) (Alcaligenes bronchisepticus).